A 242-amino-acid chain; its full sequence is Triosephosphate isomerase (242 aa).

Substrate is bound at residue 8 to 10 (NWK). His-98 acts as the Electrophile in catalysis. Glu-167 acts as the Proton acceptor in catalysis. Substrate-binding positions include Gly-173, Ser-205, and 226-227 (GG).

The protein belongs to the triosephosphate isomerase family. Homodimer.

The protein localises to the cytoplasm. It carries out the reaction D-glyceraldehyde 3-phosphate = dihydroxyacetone phosphate. The protein operates within carbohydrate biosynthesis; gluconeogenesis. Its pathway is carbohydrate degradation; glycolysis; D-glyceraldehyde 3-phosphate from glycerone phosphate: step 1/1. Functionally, involved in the gluconeogenesis. Catalyzes stereospecifically the conversion of dihydroxyacetone phosphate (DHAP) to D-glyceraldehyde-3-phosphate (G3P). The chain is Triosephosphate isomerase from Mesomycoplasma hyopneumoniae (strain 7448) (Mycoplasma hyopneumoniae).